The primary structure comprises 215 residues: [PSI+] inducibility protein 3 (215 aa).

Ser2 carries the N-acetylserine modification. 2 positions are modified to phosphoserine: Ser52 and Ser55. An SH3 domain is found at 54–113 (ASLEYVEALYQFDPQQDGDLGLKPGDKVQLLEKLSPEWYKGSCNGRTGIFPANYVKPAFS). Residue Lys80 forms a Glycyl lysine isopeptide (Lys-Gly) (interchain with G-Cter in ubiquitin) linkage. The interval 114–189 (GSNGPSNLPP…HQSSHSHLKS (76 aa)) is disordered. The PY motif motif lies at 124 to 127 (PPQY).

The protein belongs to the LSB1 family. Interacts with LAS17, RSP5 and SUP35. Post-translationally, ubiquitinated by RSP5. Ubiquitination reduces the protein abundance and its prion-inducing ability.

The protein resides in the cytoplasm. Its subcellular location is the nucleus. It localises to the cytoskeleton. The protein localises to the actin patch. Overproduction promotes the de novo induction of the [PSI+] prion form of SUP35. The prion-inducing effect depends on the association with the actin cytoskeleton. Also implicated in prion maintenance during heat stress. This chain is [PSI+] inducibility protein 3 (PIN3), found in Saccharomyces cerevisiae (strain ATCC 204508 / S288c) (Baker's yeast).